The following is a 271-amino-acid chain: 4-hydroxy-tetrahydrodipicolinate reductase (271 aa).

Residues 11-16 (GGSGRM) and glutamate 37 each bind NAD(+). Position 38 (arginine 38) interacts with NADP(+). Residues 101 to 103 (GTT) and 125 to 128 (APNM) each bind NAD(+). The active-site Proton donor/acceptor is histidine 158. (S)-2,3,4,5-tetrahydrodipicolinate is bound at residue histidine 159. Residue lysine 162 is the Proton donor of the active site. Residue 168–169 (GT) participates in (S)-2,3,4,5-tetrahydrodipicolinate binding.

The protein belongs to the DapB family.

The protein localises to the cytoplasm. It catalyses the reaction (S)-2,3,4,5-tetrahydrodipicolinate + NAD(+) + H2O = (2S,4S)-4-hydroxy-2,3,4,5-tetrahydrodipicolinate + NADH + H(+). It carries out the reaction (S)-2,3,4,5-tetrahydrodipicolinate + NADP(+) + H2O = (2S,4S)-4-hydroxy-2,3,4,5-tetrahydrodipicolinate + NADPH + H(+). It functions in the pathway amino-acid biosynthesis; L-lysine biosynthesis via DAP pathway; (S)-tetrahydrodipicolinate from L-aspartate: step 4/4. In terms of biological role, catalyzes the conversion of 4-hydroxy-tetrahydrodipicolinate (HTPA) to tetrahydrodipicolinate. In Shewanella halifaxensis (strain HAW-EB4), this protein is 4-hydroxy-tetrahydrodipicolinate reductase.